The sequence spans 294 residues: MSNKVNFKTASFLFSVCLALSAFNAHANKSDAAAKQIKKLEEDFDGRIGVFAIDTGSGNTFGYRSDERFPLCSSFKGFLAAAVLERVQQKKLDINQKVKYESRDLEYHSPITTKYKGSGMTLGDMASAALQYSDNGATNIIMERFLGGPEGMTKFMRSIGDNEFRLDRWELELNTAIPGDKRDTSTPKAVANSLNKLALGNVLNAKVKAIYQNWLKGNTTGDARIRASVPADWVVGDKTGSCGAYGTANDYAVIWPKNRAPLIVSIYTTRKSKDDKHSDKTIAEASRIAIQAID.

Positions 1–27 are cleaved as a signal peptide; the sequence is MSNKVNFKTASFLFSVCLALSAFNAHA. Cysteines 72 and 242 form a disulfide. Residue S73 is the Nucleophile; acyl-ester intermediate of the active site. A beta-lactam contacts are provided by S73, K76, S133, and N135. The Proton acceptor role is filled by E172. T239 is an a beta-lactam binding site.

Belongs to the class-A beta-lactamase family.

It carries out the reaction a beta-lactam + H2O = a substituted beta-amino acid. Its activity is regulated as follows. Partially inhibited by the beta-lactamase-blocking agents, clavulanic acid and tazobactam. Not inhibited by EDTA. In terms of biological role, class A beta-lactamase which confers resistance to the beta-lactam antibiotics, including penicillins, some cephalosporins and carbapenems, to JM109 strain E.coli. Acts via hydrolysis of the beta-lactam ring. Has penicillin-, cephalosporin- and carbapenem-hydrolyzing activities. The chain is Beta-lactamase SME-1 from Serratia marcescens.